Reading from the N-terminus, the 1396-residue chain is DNA-directed RNA polymerase subunit beta' (1396 aa).

Zn(2+) contacts are provided by Cys70, Cys72, Cys85, and Cys88. 3 residues coordinate Mg(2+): Asp460, Asp462, and Asp464. Positions 814, 888, 895, and 898 each coordinate Zn(2+).

This sequence belongs to the RNA polymerase beta' chain family. The RNAP catalytic core consists of 2 alpha, 1 beta, 1 beta' and 1 omega subunit. When a sigma factor is associated with the core the holoenzyme is formed, which can initiate transcription. It depends on Mg(2+) as a cofactor. Zn(2+) serves as cofactor.

The enzyme catalyses RNA(n) + a ribonucleoside 5'-triphosphate = RNA(n+1) + diphosphate. Functionally, DNA-dependent RNA polymerase catalyzes the transcription of DNA into RNA using the four ribonucleoside triphosphates as substrates. This is DNA-directed RNA polymerase subunit beta' from Chromobacterium violaceum (strain ATCC 12472 / DSM 30191 / JCM 1249 / CCUG 213 / NBRC 12614 / NCIMB 9131 / NCTC 9757 / MK).